The following is a 702-amino-acid chain: Cell adhesion molecule CEACAM5 (702 aa).

The signal sequence occupies residues 1-34 (MESPSAPPHRWCIPWQRLLLTASLLTFWNPPTTA). The region spanning 35–144 (KLTIESTPFN…TGQFRVYPEL (110 aa)) is the Ig-like V-type domain. 28 N-linked (GlcNAc...) asparagine glycosylation sites follow: asparagine 104, asparagine 115, asparagine 152, asparagine 182, asparagine 197, asparagine 204, asparagine 208, asparagine 246, asparagine 256, asparagine 274, asparagine 288, asparagine 292, asparagine 309, asparagine 330, asparagine 351, asparagine 360, asparagine 375, asparagine 432, asparagine 466, asparagine 480, asparagine 508, asparagine 529, asparagine 553, asparagine 560, asparagine 580, asparagine 612, asparagine 650, and asparagine 665. 6 consecutive Ig-like C2-type domains span residues 145-232 (PKPS…VILN), 240-315 (PTIS…TVTT), 323-410 (PKPF…VILN), 418-495 (PTIS…KTIT), 501-588 (PKPS…VTLD), and 593-675 (PDTP…ITVS). A disulfide bridge links cysteine 167 with cysteine 215. Cysteine 259 and cysteine 299 form a disulfide bridge. The cysteines at positions 345 and 393 are disulfide-linked. Cysteine 437 and cysteine 477 form a disulfide bridge. Cysteine 523 and cysteine 571 are oxidised to a cystine. An intrachain disulfide couples cysteine 615 to cysteine 655. Residue alanine 685 is the site of GPI-anchor amidated alanine attachment. A propeptide spans 686–702 (GATVGIMIGVLVGVALI) (removed in mature form).

This sequence belongs to the immunoglobulin superfamily. CEA family. Homodimer. In terms of processing, complex immunoreactive glycoprotein with a MW of 180 kDa comprising 60% carbohydrate. Expressed in columnar epithelial and goblet cells of the colon (at protein level). Found in adenocarcinomas of endodermally derived digestive system epithelium and fetal colon.

Its subcellular location is the cell membrane. It is found in the apical cell membrane. The protein resides in the cell surface. Its function is as follows. Cell surface glycoprotein that plays a role in cell adhesion, intracellular signaling and tumor progression. Mediates homophilic and heterophilic cell adhesion with other carcinoembryonic antigen-related cell adhesion molecules, such as CEACAM6. Plays a role as an oncogene by promoting tumor progression; induces resistance to anoikis of colorectal carcinoma cells. In terms of biological role, (Microbial infection) Receptor for E.coli Dr adhesins. Binding of E.coli Dr adhesins leads to dissociation of the homodimer. This Homo sapiens (Human) protein is Cell adhesion molecule CEACAM5.